Reading from the N-terminus, the 358-residue chain is MTLEAIRYSRGSLQILDQLLLPQQSRYEAVGSVRQAWEAIRAMKVRGAPAIALVGCLSLAVELQAGAGGPGLAALVAFVQDALSFLVTARPTAVNMARAARDLADLAAQEAEREGATEEAVRERVICWAEDMLDKDLRDNRSIGDLGAHHLLKRAAPQGGKVTVLTHCNTGALATAGYGTALGVIRSLHNLGRLEHAFCTETRPYNQGARLTAFELVYEQIPATLIADSMAAAAMAHQGVSAVVVGADRVVANGDTANKVGTYQLAIAAKHHGIPFYVAAPSSSCDLRLETGREIVIEERPDQELTDVNGVRIAAPGIGVWNPAFDVTPHDLITGGIITELGVFAPEELQAALSATIS.

M1 carries the post-translational modification N-acetylmethionine. The active-site Proton donor is the D248.

Belongs to the eIF-2B alpha/beta/delta subunits family. MtnA subfamily.

It is found in the cytoplasm. Its subcellular location is the nucleus. It catalyses the reaction 5-(methylsulfanyl)-alpha-D-ribose 1-phosphate = 5-(methylsulfanyl)-D-ribulose 1-phosphate. It functions in the pathway amino-acid biosynthesis; L-methionine biosynthesis via salvage pathway; L-methionine from S-methyl-5-thio-alpha-D-ribose 1-phosphate: step 1/6. Functionally, catalyzes the interconversion of methylthioribose-1-phosphate (MTR-1-P) into methylthioribulose-1-phosphate (MTRu-1-P). The sequence is that of Methylthioribose-1-phosphate isomerase from Bos taurus (Bovine).